The primary structure comprises 195 residues: dITP/XTP pyrophosphatase (195 aa).

8–13 (SNNQGK) contacts substrate. 2 residues coordinate Mg(2+): Glu-39 and Asp-68. Asp-68 serves as the catalytic Proton acceptor. Residues Ser-69, 149–152 (FGYD), Lys-172, and 177–178 (HR) each bind substrate.

The protein belongs to the HAM1 NTPase family. As to quaternary structure, homodimer. Mg(2+) serves as cofactor.

The enzyme catalyses XTP + H2O = XMP + diphosphate + H(+). It carries out the reaction dITP + H2O = dIMP + diphosphate + H(+). The catalysed reaction is ITP + H2O = IMP + diphosphate + H(+). Pyrophosphatase that catalyzes the hydrolysis of nucleoside triphosphates to their monophosphate derivatives, with a high preference for the non-canonical purine nucleotides XTP (xanthosine triphosphate), dITP (deoxyinosine triphosphate) and ITP. Seems to function as a house-cleaning enzyme that removes non-canonical purine nucleotides from the nucleotide pool, thus preventing their incorporation into DNA/RNA and avoiding chromosomal lesions. The polypeptide is dITP/XTP pyrophosphatase (Staphylococcus aureus (strain MRSA252)).